Reading from the N-terminus, the 277-residue chain is 3-methyl-2-oxobutanoate hydroxymethyltransferase (277 aa).

Mg(2+) contacts are provided by Asp53 and Asp96. 3-methyl-2-oxobutanoate-binding positions include 53-54 (DS), Asp96, and Lys126. Position 128 (Glu128) interacts with Mg(2+). Glu195 serves as the catalytic Proton acceptor.

The protein belongs to the PanB family. As to quaternary structure, homodecamer; pentamer of dimers. Mg(2+) is required as a cofactor.

It is found in the cytoplasm. It catalyses the reaction 3-methyl-2-oxobutanoate + (6R)-5,10-methylene-5,6,7,8-tetrahydrofolate + H2O = 2-dehydropantoate + (6S)-5,6,7,8-tetrahydrofolate. It functions in the pathway cofactor biosynthesis; (R)-pantothenate biosynthesis; (R)-pantoate from 3-methyl-2-oxobutanoate: step 1/2. Catalyzes the reversible reaction in which hydroxymethyl group from 5,10-methylenetetrahydrofolate is transferred onto alpha-ketoisovalerate to form ketopantoate. This chain is 3-methyl-2-oxobutanoate hydroxymethyltransferase, found in Prosthecochloris aestuarii (strain DSM 271 / SK 413).